A 189-amino-acid chain; its full sequence is UPF0200 protein Smar_1234 (189 aa).

10 to 17 serves as a coordination point for ATP; that stretch reads GMPGAGKS.

The protein belongs to the UPF0200 family.

The sequence is that of UPF0200 protein Smar_1234 from Staphylothermus marinus (strain ATCC 43588 / DSM 3639 / JCM 9404 / F1).